The following is a 395-amino-acid chain: FAD-dependent monooxygenase cctM (395 aa).

Residues 1 to 23 (MEPGTDVRRVLVIGAGAAGLLIA) form the signal peptide. Residues E37, G52, and R112 each coordinate FAD. N138 and N298 each carry an N-linked (GlcNAc...) asparagine glycan. Position 306 (D306) interacts with FAD.

The protein belongs to the paxM FAD-dependent monooxygenase family. FAD serves as cofactor.

Its pathway is mycotoxin biosynthesis. Functionally, FAD-dependent monooxygenase; part of the gene cluster that mediates the biosynthesis of the mycotoxin cyclochlorotine, a hepatotoxic and carcinogenic cyclic chlorinated pentapeptide. The function of cctM within the pathway, if any, remains undetermined. The NRPS cctN initially catalyzes the condensation of L-serine (Ser), Pro, L-2-aminobutyrate (2Abu), Ser, and beta-Phe in this order to produce isocyclotine. After the dichlorination of Pro2 catalyzed by cctP2 to produce isocyclochlorotine, the cctO-mediated transacylation of isocyclochlorotine can furnish cyclochlorotine. The subsequent hydroxylation of cyclochlorotine by cctR yields hydroxycyclochlorotine as the final product. CctP1 probably acts as a phenylalanine aminomutase and provides the uncommon building block beta-Phe. Furthermore, 2Abu can be synthesized from threonine by one of the threonine dehydratases and transaminases localized outside of the cluster. The functions of the remaining proteins encoded by the cluster, cctM and cctT, have not been identified yet. The protein is FAD-dependent monooxygenase cctM of Talaromyces islandicus (Penicillium islandicum).